A 203-amino-acid chain; its full sequence is Putative 3-methyladenine DNA glycosylase (203 aa).

It belongs to the DNA glycosylase MPG family.

The sequence is that of Putative 3-methyladenine DNA glycosylase from Staphylococcus saprophyticus subsp. saprophyticus (strain ATCC 15305 / DSM 20229 / NCIMB 8711 / NCTC 7292 / S-41).